A 432-amino-acid chain; its full sequence is Adenylosuccinate synthetase (432 aa).

GTP is bound by residues 12–18 and 40–42; these read GDEGKGK and GHT. The active-site Proton acceptor is D13. Residues D13 and G40 each contribute to the Mg(2+) site. IMP is bound by residues 13 to 16, 38 to 41, T132, R146, Q226, T241, and R305; these read DEGK and NAGH. Catalysis depends on H41, which acts as the Proton donor. 301-307 is a substrate binding site; the sequence is VVTGRKR. GTP-binding positions include R307, 333–335, and 415–417; these read KLD and STS.

This sequence belongs to the adenylosuccinate synthetase family. In terms of assembly, homodimer. The cofactor is Mg(2+).

The protein localises to the cytoplasm. It catalyses the reaction IMP + L-aspartate + GTP = N(6)-(1,2-dicarboxyethyl)-AMP + GDP + phosphate + 2 H(+). It participates in purine metabolism; AMP biosynthesis via de novo pathway; AMP from IMP: step 1/2. Plays an important role in the de novo pathway of purine nucleotide biosynthesis. Catalyzes the first committed step in the biosynthesis of AMP from IMP. The protein is Adenylosuccinate synthetase of Rhizobium etli (strain CIAT 652).